Consider the following 237-residue polypeptide: Concanavalin V (237 aa).

Residues Glu8 and Asp10 each contribute to the Mn(2+) site. Asp10, Tyr12, Asn14, and Asp19 together coordinate Ca(2+). Residue Asn14 coordinates a carbohydrate. Mn(2+)-binding residues include Asp19 and His24. Residues Gly70, 98-100 (GLY), Asp208, and Arg228 contribute to the a carbohydrate site.

It belongs to the leguminous lectin family. As to quaternary structure, homotetramer. In terms of processing, concanavalin A-like lectins of the Diocleinae subtribe undergo proteolytic processing referred to as circular permutation. The propeptide is split into an N-terminal and a C-terminal part, the gamma and beta chain, respectively. These are then religated in beta-gamma order to form the mature alpha chain. The beta and gamma chains can often be detected in cell extracts. Residues 1-118 of the mature chain, as displayed here, probably constitute the beta chain in the propeptide, residues 119-237 the gamma chain.

D-mannose/D-glucose-binding lectin which binds alpha-methyl-D-mannoside, D-mannose and D-glucose in that order. Also binds to serum fetuin and ovalbumin. Has hemagglutinating activity towards rabbit erythrocytes. Is not toxic towards larvae of the brine shrimp Artemia. Induces relaxation in rat endothelized aorta. Shows a transient edematogenic effect in rat. This Canavalia cathartica (Jackbean) protein is Concanavalin V.